The chain runs to 226 residues: DNA mismatch repair protein MutH (226 aa).

It belongs to the MutH family.

It localises to the cytoplasm. Functionally, sequence-specific endonuclease that cleaves unmethylated GATC sequences. It is involved in DNA mismatch repair. The sequence is that of DNA mismatch repair protein MutH from Actinobacillus pleuropneumoniae serotype 5b (strain L20).